A 243-amino-acid chain; its full sequence is Carboxy-S-adenosyl-L-methionine synthase (243 aa).

Residues Tyr40, 65–67 (GCS), 90–91 (DN), 118–119 (DI), Asn133, and Arg200 each bind S-adenosyl-L-methionine.

This sequence belongs to the class I-like SAM-binding methyltransferase superfamily. Cx-SAM synthase family. As to quaternary structure, homodimer.

It carries out the reaction prephenate + S-adenosyl-L-methionine = carboxy-S-adenosyl-L-methionine + 3-phenylpyruvate + H2O. In terms of biological role, catalyzes the conversion of S-adenosyl-L-methionine (SAM) to carboxy-S-adenosyl-L-methionine (Cx-SAM). The polypeptide is Carboxy-S-adenosyl-L-methionine synthase (Shewanella sp. (strain W3-18-1)).